The primary structure comprises 319 residues: Transcription factor VBP (319 aa).

2 stretches are compositionally biased toward low complexity: residues 1-31 and 143-158; these read MPGRAAHQEAAAAGGAAAEPTAAGGSAGAVA and ASASTGSPVSSSSTAV. Disordered regions lie at residues 1 to 35 and 139 to 186; these read MPGRAAHQEAAAAGGAAAEPTAAGGSAGAVAQQPE and EKEP…DPDC. Positions 159–180 are enriched in polar residues; it reads YQQSEAASSTESPPQNERNTPS. The region spanning 243-306 is the bZIP domain; that stretch reads DEKYWTRRKK…GRCKNIVSKY (64 aa). The basic motif stretch occupies residues 245-265; the sequence is KYWTRRKKNNVAAKRSRDARR. A leucine-zipper region spans residues 266-273; it reads LKENQITI.

This sequence belongs to the bZIP family. PAR subfamily. In terms of assembly, binds DNA as a homodimer or a heterodimer. Exists as a stable dimer in the absence of DNA. As to expression, isoform 1 and isoform 3 are expressed in a variety of somatic tissues, including liver, heart, intestine, stomach and kidney. Both isoforms are also expressed in hepatoma (LMH) cells and in embryonic fibroblast cell lines. Isoform 2 and isoform 4 are expressed in adult heart and intestine.

The protein resides in the nucleus. In terms of biological role, transcription factor that binds to and transactivates the vitellogenin II (VTG2) promoter. Binds to the palindromic sequence 5'-GTTTACATAAAC-3'. This chain is Transcription factor VBP (TEF), found in Gallus gallus (Chicken).